The following is a 272-amino-acid chain: Nitrogenase iron protein (272 aa).

8–15 provides a ligand contact to ATP; sequence GKGGIGKS. A [4Fe-4S] cluster-binding site is contributed by C94. R97 carries the post-translational modification ADP-ribosylarginine; by dinitrogenase reductase ADP-ribosyltransferase. Residue C129 coordinates [4Fe-4S] cluster.

Belongs to the NifH/BchL/ChlL family. As to quaternary structure, homodimer. [4Fe-4S] cluster serves as cofactor. In terms of processing, the reversible ADP-ribosylation of Arg-97 inactivates the nitrogenase reductase and regulates nitrogenase activity.

The catalysed reaction is N2 + 8 reduced [2Fe-2S]-[ferredoxin] + 16 ATP + 16 H2O = H2 + 8 oxidized [2Fe-2S]-[ferredoxin] + 2 NH4(+) + 16 ADP + 16 phosphate + 6 H(+). Functionally, the key enzymatic reactions in nitrogen fixation are catalyzed by the nitrogenase complex, which has 2 components: the iron protein and the molybdenum-iron protein. The polypeptide is Nitrogenase iron protein (Desulforamulus reducens (strain ATCC BAA-1160 / DSM 100696 / MI-1) (Desulfotomaculum reducens)).